Here is a 166-residue protein sequence, read N- to C-terminus: C-signal (166 aa).

Post-translationally, the mature C-signal (p17) is derived from the precursor sequence (p25) by proteolytic cleavage. The subtilisin-like protease PopC is directly responsible for cleavage of p25 to p17. The cleavage site is probably located between amino acid residues 60 and 68 in p25.

It is found in the secreted. It localises to the cell outer membrane. With respect to regulation, synthesized as a precursor protein (p25), which is cleaved after secretion to generate the mature active C-signal (p17). The p25 precursor purified from M.xanthus cells does not display C-signal activity. In terms of biological role, cell-cell signaling protein required for fruiting body formation, a multicellular developmental program that is induced in response to starvation. Necessary for rippling, cellular aggregation, spore differentiation and for gene expression that is initiated after 6 hours of starvation. In starving cells, the C-signal directly induces aggregation and sporulation, which are induced at distinct threshold levels of C-signaling. Contact with C-signaling induces cells to glide with high speed and low stop and reversal frequencies toward aggregation centers. The C-signal acts as a morphogen and induces distinct events at distinct threshold levels. A regulated increase in the level of C-signaling during development ensures the correct temporal order of aggregation and sporulation. This Myxococcus xanthus protein is C-signal.